The sequence spans 371 residues: tRNA-specific 2-thiouridylase MnmA (371 aa).

ATP contacts are provided by residues 13-20 (GMSGGVDS) and methionine 39. The interaction with target base in tRNA stretch occupies residues 99-101 (NPD). Cysteine 104 (nucleophile) is an active-site residue. Cysteine 104 and cysteine 200 are joined by a disulfide. An ATP-binding site is contributed by glycine 128. The interaction with tRNA stretch occupies residues 150–152 (KDQ). Cysteine 200 acts as the Cysteine persulfide intermediate in catalysis. The tract at residues 308–309 (RY) is interaction with tRNA.

Belongs to the MnmA/TRMU family.

It is found in the cytoplasm. It catalyses the reaction S-sulfanyl-L-cysteinyl-[protein] + uridine(34) in tRNA + AH2 + ATP = 2-thiouridine(34) in tRNA + L-cysteinyl-[protein] + A + AMP + diphosphate + H(+). Catalyzes the 2-thiolation of uridine at the wobble position (U34) of tRNA, leading to the formation of s(2)U34. The chain is tRNA-specific 2-thiouridylase MnmA from Listeria monocytogenes serotype 4a (strain HCC23).